The chain runs to 112 residues: DNA-directed RNA polymerases I and III subunit RPAC2 (112 aa).

It belongs to the archaeal Rpo11/eukaryotic RPB11/RPC19 RNA polymerase subunit family. Component of the RNA polymerase I (Pol I) and RNA polymerase III (Pol III) complexes consisting of at least 13 and 17 subunits, respectively.

Its subcellular location is the nucleus. Its function is as follows. DNA-dependent RNA polymerase catalyzes the transcription of DNA into RNA using the four ribonucleoside triphosphates as substrates. Common core component of RNA polymerases I and III which synthesize ribosomal RNA precursors and small RNAs, such as 5S rRNA and tRNAs, respectively. The chain is DNA-directed RNA polymerases I and III subunit RPAC2 (polr1d) from Danio rerio (Zebrafish).